A 446-amino-acid polypeptide reads, in one-letter code: tRNA modification GTPase MnmE (446 aa).

3 residues coordinate (6S)-5-formyl-5,6,7,8-tetrahydrofolate: arginine 22, glutamate 80, and lysine 119. Residues glycine 215 to glycine 370 enclose the TrmE-type G domain. Residue asparagine 225 participates in K(+) binding. GTP-binding positions include asparagine 225–threonine 230, threonine 244–threonine 250, and aspartate 269–glycine 272. Residue serine 229 coordinates Mg(2+). Positions 244, 246, and 249 each coordinate K(+). Mg(2+) is bound at residue threonine 250. Residue lysine 446 participates in (6S)-5-formyl-5,6,7,8-tetrahydrofolate binding.

Belongs to the TRAFAC class TrmE-Era-EngA-EngB-Septin-like GTPase superfamily. TrmE GTPase family. In terms of assembly, homodimer. Heterotetramer of two MnmE and two MnmG subunits. Requires K(+) as cofactor.

It localises to the cytoplasm. Exhibits a very high intrinsic GTPase hydrolysis rate. Involved in the addition of a carboxymethylaminomethyl (cmnm) group at the wobble position (U34) of certain tRNAs, forming tRNA-cmnm(5)s(2)U34. The protein is tRNA modification GTPase MnmE of Legionella pneumophila (strain Corby).